Consider the following 401-residue polypeptide: MSVAFASARPRGKGEVTQQTIQKMLDENHHLIQCILDYQSKGKTAECTQYQQILHRNLVYLATIADSNQNMQSLLPAPPTQNMNLGPGALSQSGSSQGLHPQGSLSDTVSTGLPPASLMQGQIGNGPNHVSMQQTAQSTLPTTSMSMSGSGHGTGPGYSHSGPTSQSVPMQGQGAISNYVSRTNINMQSNPVSMMHQQAARPTTTQRRVEASITRARRPLHDGPGWQGGSMMGQRPMAPYRPSQQGSSQQYLGQEEYYSEQYSHSQGSAEPMSQQYYPDGHSDYAYQQSSYTEQSYDRSFEDPTQHYYEGGNSQYSQQQAGYQQGTAQQQTYSQQQYPNQQSYPGQQQGYGPAQGAPSQYSGYQQGQGQQYGSYRTSQTGPSAQQQRPYGYEQGQYGNYQQ.

The N-terminal auto-inhibitory domain; necessary for interaction with SMARCA4/BRG1 stretch occupies residues 1 to 148 (MSVAFASARP…TLPTTSMSMS (148 aa)). The SH2-binding motif lies at 50–53 (YQQI). Disordered stretches follow at residues 72-171 (QSLL…VPMQ) and 214-401 (TRAR…NYQQ). Positions 85-106 (LGPGALSQSGSSQGLHPQGSLS) are enriched in low complexity. The span at 128 to 137 (NHVSMQQTAQ) shows a compositional bias: polar residues. Low complexity predominate over residues 138 to 149 (STLPTTSMSMSG). A methionine-rich intra-molecular domain region spans residues 149-237 (GSGHGTGPGY…GGSMMGQRPM (89 aa)). The tract at residues 251–322 (YLGQEEYYSE…SQYSQQQAGY (72 aa)) is MFD domain. Composition is skewed to polar residues over residues 260-276 (EQYS…SQQY) and 285-294 (AYQQSSYTEQ). Residues 295–304 (SYDRSFEDPT) show a composition bias toward basic and acidic residues. A compositionally biased stretch (low complexity) spans 310–374 (GGNSQYSQQQ…QGQGQQYGSY (65 aa)). The tract at residues 339 to 401 (NQQSYPGQQQ…EQGQYGNYQQ (63 aa)) is necessary for nuclear localization. The SH2-binding signature appears at 358–361 (SQYS). Polar residues predominate over residues 375-387 (RTSQTGPSAQQQR). An SH3-binding motif is present at residues 376–384 (TSQTGPSAQ). Positions 389-401 (YGYEQGQYGNYQQ) are enriched in low complexity. Residues 392 to 401 (EQGQYGNYQQ) are necessary for interaction with CREBBP and for the recruitment of CREBBP to the nuclear bodies. The short motif at 396 to 399 (YGNY) is the SH2-binding element.

It belongs to the SS18 family. Homodimer. Dimerization may be necessary for its function in neuronal dendritic development. Interacts (via C-terminus) with CREBBP (via N-terminus), EP300 and SMARCA4/BRG1. Interacts with the nBAF complex. Association with CREBBP facilitates transcription while the association with SMARCA4/BRG1 suppresses CREST-mediated transcription in resting neurons. As to expression, brain (at protein level). Also found in the heart, liver, kidney and testis.

The protein localises to the nucleus. It is found in the chromosome. Its subcellular location is the centromere. The protein resides in the kinetochore. Functionally, transcriptional activator which is required for calcium-dependent dendritic growth and branching in cortical neurons. Recruits CREB-binding protein (CREBBP) to nuclear bodies. Component of the CREST-BRG1 complex, a multiprotein complex that regulates promoter activation by orchestrating a calcium-dependent release of a repressor complex and a recruitment of an activator complex. In resting neurons, transcription of the c-FOS promoter is inhibited by BRG1-dependent recruitment of a phospho-RB1-HDAC1 repressor complex. Upon calcium influx, RB1 is dephosphorylated by calcineurin, which leads to release of the repressor complex. At the same time, there is increased recruitment of CREBBP to the promoter by a CREST-dependent mechanism, which leads to transcriptional activation. The CREST-BRG1 complex also binds to the NR2B promoter, and activity-dependent induction of NR2B expression involves a release of HDAC1 and recruitment of CREBBP. The sequence is that of Calcium-responsive transcription coactivator (Ss18l1) from Rattus norvegicus (Rat).